A 385-amino-acid polypeptide reads, in one-letter code: MSWQQRVDDALTARRATDTLRRRYVVSQGAGRWLVANGRQYLNFSSNDYLGLSQHPQIIRAWQQAATRFGVGSGGSGHISGYSVAHQALEEELAQWLGYPRALLFISGFAANQAVITALMKKNDRIVADRLSHASLLEAANLSPAQLRRFIHNDTQHLSRLLQSPCPGQQLVVAEGIYSMDGDSAPLAEIQQITHKHHAWLLVDDAHGIGVTGVEGRGTCWLQGMKPELLVVTFGKGFGVSGAAVLCSESVANYLLQFARHLVYSTSMPPAQAQALSASLAVIRSDEGCERREKLADLVKRFRAGVNASRFTLLNAHSAIQPLVVGDNIRALRLAEALRRRGCWVSAIRPPTVPAGTARLRLTLTQSHEACDIDRLLEVLHGAGE.

Arginine 21 is a binding site for substrate. 108-109 is a binding site for pyridoxal 5'-phosphate; the sequence is GF. A substrate-binding site is contributed by histidine 133. The pyridoxal 5'-phosphate site is built by serine 179, histidine 207, and threonine 233. At lysine 236 the chain carries N6-(pyridoxal phosphate)lysine. A substrate-binding site is contributed by threonine 352.

This sequence belongs to the class-II pyridoxal-phosphate-dependent aminotransferase family. BioF subfamily. In terms of assembly, homodimer. The cofactor is pyridoxal 5'-phosphate.

The enzyme catalyses 6-carboxyhexanoyl-[ACP] + L-alanine + H(+) = (8S)-8-amino-7-oxononanoate + holo-[ACP] + CO2. It participates in cofactor biosynthesis; biotin biosynthesis. Its function is as follows. Catalyzes the decarboxylative condensation of pimeloyl-[acyl-carrier protein] and L-alanine to produce 8-amino-7-oxononanoate (AON), [acyl-carrier protein], and carbon dioxide. In Salmonella arizonae (strain ATCC BAA-731 / CDC346-86 / RSK2980), this protein is 8-amino-7-oxononanoate synthase.